A 388-amino-acid chain; its full sequence is Chorismate synthase (388 aa).

Positions 39 and 45 each coordinate NADP(+). FMN-binding positions include 132–134 (RSS), 251–252 (NA), glycine 296, 311–315 (KPIPT), and arginine 337.

The protein belongs to the chorismate synthase family. In terms of assembly, homotetramer. It depends on FMNH2 as a cofactor.

It catalyses the reaction 5-O-(1-carboxyvinyl)-3-phosphoshikimate = chorismate + phosphate. It functions in the pathway metabolic intermediate biosynthesis; chorismate biosynthesis; chorismate from D-erythrose 4-phosphate and phosphoenolpyruvate: step 7/7. In terms of biological role, catalyzes the anti-1,4-elimination of the C-3 phosphate and the C-6 proR hydrogen from 5-enolpyruvylshikimate-3-phosphate (EPSP) to yield chorismate, which is the branch point compound that serves as the starting substrate for the three terminal pathways of aromatic amino acid biosynthesis. This reaction introduces a second double bond into the aromatic ring system. This is Chorismate synthase from Staphylococcus aureus (strain Mu50 / ATCC 700699).